The primary structure comprises 124 residues: Putative ankyrin repeat protein RF_1087 (124 aa).

ANK repeat units lie at residues 17–46, 50–79, and 83–112; these read NDQK…NPNI, NGET…IIDS, and FERT…TIGN.

This is Putative ankyrin repeat protein RF_1087 from Rickettsia felis (strain ATCC VR-1525 / URRWXCal2) (Rickettsia azadi).